The chain runs to 105 residues: Thioredoxin (105 aa).

The Thioredoxin domain occupies 2 to 105 (VKLIESKEAF…KLEASITEYA (104 aa)). At Lys3 the chain carries N6-acetyllysine. Lys8 carries the N6-succinyllysine modification. Catalysis depends on nucleophile residues Cys32 and Cys35. An intrachain disulfide couples Cys32 to Cys35. Lys39 carries the post-translational modification N6-acetyllysine. S-nitrosocysteine is present on residues Cys62 and Cys69. Cys73 is subject to S-nitrosocysteine; alternate. Position 94 is an N6-acetyllysine; alternate (Lys94). At Lys94 the chain carries N6-succinyllysine; alternate.

The protein belongs to the thioredoxin family. In terms of assembly, homodimer; disulfide-linked. Interacts with TXNIP through the redox-active site. Interacts with MAP3K5 and CASP3. Interacts with APEX1; the interaction stimulates the FOS/JUN AP-1 DNA-binding activity in a redox-dependent manner. In the fully reduced protein, both Cys-69 and Cys-73 are nitrosylated in response to nitric oxide (NO). When two disulfide bonds are present in the protein, only Cys-73 is nitrosylated. Cys-73 can serve as donor for nitrosylation of target proteins.

It localises to the nucleus. Its subcellular location is the cytoplasm. It is found in the secreted. In terms of biological role, participates in various redox reactions through the reversible oxidation of its active center dithiol to a disulfide and catalyzes dithiol-disulfide exchange reactions. Plays a role in the reversible S-nitrosylation of cysteine residues in target proteins, and thereby contributes to the response to intracellular nitric oxide. Nitrosylates the active site Cys of CASP3 in response to nitric oxide (NO), and thereby inhibits caspase-3 activity. Induces the FOS/JUN AP-1 DNA binding activity in ionizing radiation (IR) cells through its oxidation/reduction status and stimulates AP-1 transcriptional activity. ADF augments the expression of the interleukin-2 receptor TAC (IL2R/P55). The chain is Thioredoxin (Txn) from Mus musculus (Mouse).